The primary structure comprises 303 residues: Probable 5-dehydro-4-deoxyglucarate dehydratase (303 aa).

The protein belongs to the DapA family.

It catalyses the reaction 5-dehydro-4-deoxy-D-glucarate + H(+) = 2,5-dioxopentanoate + CO2 + H2O. Its pathway is carbohydrate acid metabolism; D-glucarate degradation; 2,5-dioxopentanoate from D-glucarate: step 2/2. In Acidovorax ebreus (strain TPSY) (Diaphorobacter sp. (strain TPSY)), this protein is Probable 5-dehydro-4-deoxyglucarate dehydratase.